A 527-amino-acid chain; its full sequence is MSSFLVAYDDESEEEDNNNNNNNNNNNNNNNIINNNNNNNNSNNQIKDEDNIYSYNNDTIISQSQVQPKTVTLGLNNKLNQKKIQQTQQIQEKDKLSSDFNFYNNNNNSNSNSNNDENDDFIYNSNNKKRNNIDNDAEEINEFRNPDLKNKPKSSHSLFSMLPTPKSSQNTTTTQQSSYSFPKPVNNNNNNNNNNNNNNNNNNNNNNNNNNNNNNNNNNSNNNDDEKDDDKSKKINENENTVNKKDNIENQNENQNEIENENENNNNEDTKKKINNSMIPGSLRKKLLKNQPKTKKSTTTTTTATTTTTTITSVKPITTEINNNNSNSNNLPSIPIGNEKSKINDNQDEEDENENDGLFFSFQQSSTNNKKPQQEEIDYSAYINNDDGDDDDDDDENENENDSQPEEEYEENKQQQQQEWTQEQIQQYWYMQQQEQQQQQQQQPFNLKSQQQYQHYHEYNNVGKIYEVNQSKMLEENNSFKILELRKTTQEQDRVLANIPKVSKSQRQKHTIGSLLGDYQTKKYKFE.

Disordered stretches follow at residues 1–49 (MSSF…IKDE), 99–307 (DFNF…ATTT), 319–353 (TEINNNNSNSNNLPSIPIGNEKSKINDNQDEEDEN), and 382–419 (YINNDDGDDDDDDDENENENDSQPEEEYEENKQQQQQE). Acidic residues predominate over residues 8-17 (YDDESEEEDN). Low complexity-rich tracts occupy residues 18–44 (NNNNNNNNNNNNNNIINNNNNNNNSNN) and 99–115 (DFNFYNNNNNSNSNSNN). Positions 141–150 (NEFRNPDLKN) are enriched in basic and acidic residues. Composition is skewed to low complexity over residues 167 to 178 (SSQNTTTTQQSS) and 186 to 222 (NNNNNNNNNNNNNNNNNNNNNNNNNNNNNNNNNNSNN). A compositionally biased stretch (basic and acidic residues) spans 229 to 248 (DDKSKKINENENTVNKKDNI). The segment covering 283 to 296 (LRKKLLKNQPKTKK) has biased composition (basic residues). Composition is skewed to low complexity over residues 297–307 (STTTTTTATTT) and 319–330 (TEINNNNSNSNN). Over residues 386–410 (DDGDDDDDDDENENENDSQPEEEYE) the composition is skewed to acidic residues.

This is an uncharacterized protein from Dictyostelium discoideum (Social amoeba).